The chain runs to 254 residues: UPF0246 protein lpp1320 (254 aa).

The protein belongs to the UPF0246 family.

The polypeptide is UPF0246 protein lpp1320 (Legionella pneumophila (strain Paris)).